A 459-amino-acid polypeptide reads, in one-letter code: uncharacterized protein (459 aa).

The 59-residue stretch at 5-63 (PVEEGQKFPLTIRRMGINGEGIGYFKKAVVFVPGAITGEEVVVEAVKVRDRFTEAKLNK) folds into the TRAM domain. Positions 76, 82, 85, and 166 each coordinate [4Fe-4S] cluster. Positions 290, 319, 340, and 388 each coordinate S-adenosyl-L-methionine. The Nucleophile role is filled by Cys415.

This sequence belongs to the class I-like SAM-binding methyltransferase superfamily. RNA M5U methyltransferase family.

This is an uncharacterized protein from Listeria monocytogenes serotype 4b (strain F2365).